A 198-amino-acid chain; its full sequence is Nucleoside triphosphate pyrophosphatase (198 aa).

Asp74 acts as the Proton acceptor in catalysis.

The protein belongs to the Maf family. A divalent metal cation serves as cofactor.

Its subcellular location is the cytoplasm. It catalyses the reaction a ribonucleoside 5'-triphosphate + H2O = a ribonucleoside 5'-phosphate + diphosphate + H(+). The catalysed reaction is a 2'-deoxyribonucleoside 5'-triphosphate + H2O = a 2'-deoxyribonucleoside 5'-phosphate + diphosphate + H(+). In terms of biological role, nucleoside triphosphate pyrophosphatase. May have a dual role in cell division arrest and in preventing the incorporation of modified nucleotides into cellular nucleic acids. The sequence is that of Nucleoside triphosphate pyrophosphatase from Sphingopyxis alaskensis (strain DSM 13593 / LMG 18877 / RB2256) (Sphingomonas alaskensis).